The sequence spans 299 residues: 4-diphosphocytidyl-2-C-methyl-D-erythritol kinase (299 aa).

Lysine 18 is a catalytic residue. 104-114 (PIASGIGGGSS) lines the ATP pocket. The active site involves aspartate 146.

Belongs to the GHMP kinase family. IspE subfamily.

It carries out the reaction 4-CDP-2-C-methyl-D-erythritol + ATP = 4-CDP-2-C-methyl-D-erythritol 2-phosphate + ADP + H(+). It functions in the pathway isoprenoid biosynthesis; isopentenyl diphosphate biosynthesis via DXP pathway; isopentenyl diphosphate from 1-deoxy-D-xylulose 5-phosphate: step 3/6. In terms of biological role, catalyzes the phosphorylation of the position 2 hydroxy group of 4-diphosphocytidyl-2C-methyl-D-erythritol. In Brucella abortus biovar 1 (strain 9-941), this protein is 4-diphosphocytidyl-2-C-methyl-D-erythritol kinase.